The sequence spans 597 residues: Gamma-terpinene synthase, chloroplastic (597 aa).

Residues 1 to 47 constitute a chloroplast transit peptide; sequence MATLSMQVSILNKQLKNLNSFGMRASKLPLVARRVDVSTTRLRPICS. The Mn(2+) site is built by Asp350 and Asp354. A DDXXD motif motif is present at residues 350–354; that stretch reads DDVYD. Homodimerization regions lie at residues 356–362 and 428–464; these read YGTLDEL and EAKWYYAGYTPTLAEYLENAKVSISSPTIISQVYFTL. Mn(2+) contacts are provided by Asp494 and Glu502.

It belongs to the terpene synthase family. As to quaternary structure, homodimer. Mn(2+) is required as a cofactor. It depends on Mg(2+) as a cofactor.

Its subcellular location is the plastid. The protein localises to the chloroplast. It carries out the reaction (2E)-geranyl diphosphate = gamma-terpinene + diphosphate. Its pathway is secondary metabolite biosynthesis; terpenoid biosynthesis. Its function is as follows. Involved in the biosynthesis of phenolic monoterpenes natural products thymol and carvacrol which have a broad range of biological activities acting as antimicrobial compounds, insecticides, antioxidants and pharmaceutical agents. Monoterpene synthase which catalyzes the conversion of geranyl diphosphate (GPP) to gamma-terpinene and minor amounts of other monoterpenes (e.g. alpha-thujene, alpha-terpinene, myrcene, sabinene, (+)-R-limonene, alpha-pinene and alpha-phellandrene). This chain is Gamma-terpinene synthase, chloroplastic, found in Thymus caespititius (Cretan thyme).